We begin with the raw amino-acid sequence, 347 residues long: Selenide, water dikinase (347 aa).

Residue Cys-17 is part of the active site. Residues Lys-20 and 48 to 50 (TRD) contribute to the ATP site. Asp-51 is a binding site for Mg(2+). Residues Asp-68, Asp-91, and 139–141 (GHS) each bind ATP. Position 91 (Asp-91) interacts with Mg(2+). Asp-227 lines the Mg(2+) pocket.

This sequence belongs to the selenophosphate synthase 1 family. Class I subfamily. Homodimer. It depends on Mg(2+) as a cofactor.

The enzyme catalyses hydrogenselenide + ATP + H2O = selenophosphate + AMP + phosphate + 2 H(+). In terms of biological role, synthesizes selenophosphate from selenide and ATP. The chain is Selenide, water dikinase from Enterobacter sp. (strain 638).